A 434-amino-acid chain; its full sequence is ATP-dependent protease ATPase subunit HslU (434 aa).

Residues valine 18, glycine 60–glutamate 65, aspartate 247, glutamate 312, and arginine 384 each bind ATP.

This sequence belongs to the ClpX chaperone family. HslU subfamily. As to quaternary structure, a double ring-shaped homohexamer of HslV is capped on each side by a ring-shaped HslU homohexamer. The assembly of the HslU/HslV complex is dependent on binding of ATP.

It localises to the cytoplasm. In terms of biological role, ATPase subunit of a proteasome-like degradation complex; this subunit has chaperone activity. The binding of ATP and its subsequent hydrolysis by HslU are essential for unfolding of protein substrates subsequently hydrolyzed by HslV. HslU recognizes the N-terminal part of its protein substrates and unfolds these before they are guided to HslV for hydrolysis. This is ATP-dependent protease ATPase subunit HslU from Bradyrhizobium diazoefficiens (strain JCM 10833 / BCRC 13528 / IAM 13628 / NBRC 14792 / USDA 110).